Consider the following 416-residue polypeptide: Multifunctional CCA protein (416 aa).

ATP-binding residues include Gly-8 and Arg-11. Gly-8 and Arg-11 together coordinate CTP. Mg(2+) is bound by residues Asp-21 and Asp-23. Residues Arg-91, Arg-137, and Arg-140 each coordinate ATP. Positions 91, 137, and 140 each coordinate CTP. Residues 228 to 329 enclose the HD domain; sequence TGVHTLMVLA…VKIFDKADFW (102 aa).

Belongs to the tRNA nucleotidyltransferase/poly(A) polymerase family. Bacterial CCA-adding enzyme type 1 subfamily. Monomer. Can also form homodimers and oligomers. Mg(2+) is required as a cofactor. It depends on Ni(2+) as a cofactor.

The catalysed reaction is a tRNA precursor + 2 CTP + ATP = a tRNA with a 3' CCA end + 3 diphosphate. The enzyme catalyses a tRNA with a 3' CCA end + 2 CTP + ATP = a tRNA with a 3' CCACCA end + 3 diphosphate. In terms of biological role, catalyzes the addition and repair of the essential 3'-terminal CCA sequence in tRNAs without using a nucleic acid template. Adds these three nucleotides in the order of C, C, and A to the tRNA nucleotide-73, using CTP and ATP as substrates and producing inorganic pyrophosphate. tRNA 3'-terminal CCA addition is required both for tRNA processing and repair. Also involved in tRNA surveillance by mediating tandem CCA addition to generate a CCACCA at the 3' terminus of unstable tRNAs. While stable tRNAs receive only 3'-terminal CCA, unstable tRNAs are marked with CCACCA and rapidly degraded. This chain is Multifunctional CCA protein, found in Shewanella baltica (strain OS195).